A 338-amino-acid chain; its full sequence is Ketol-acid reductoisomerase (NADP(+)) (338 aa).

The KARI N-terminal Rossmann domain maps to 1 to 181 (MKVFYDNDAD…GGTRAGVIET (181 aa)). NADP(+) contacts are provided by residues 24–27 (YGSQ), R47, S50, S52, and 82–85 (DEGQ). H107 is a catalytic residue. Residue G133 participates in NADP(+) binding. One can recognise a KARI C-terminal knotted domain in the interval 182-327 (SFREETETDL…SKLRSMMTWI (146 aa)). D190, E194, E226, and E230 together coordinate Mg(2+). Residue S251 coordinates substrate.

Belongs to the ketol-acid reductoisomerase family. Mg(2+) serves as cofactor.

It catalyses the reaction (2R)-2,3-dihydroxy-3-methylbutanoate + NADP(+) = (2S)-2-acetolactate + NADPH + H(+). It carries out the reaction (2R,3R)-2,3-dihydroxy-3-methylpentanoate + NADP(+) = (S)-2-ethyl-2-hydroxy-3-oxobutanoate + NADPH + H(+). Its pathway is amino-acid biosynthesis; L-isoleucine biosynthesis; L-isoleucine from 2-oxobutanoate: step 2/4. It participates in amino-acid biosynthesis; L-valine biosynthesis; L-valine from pyruvate: step 2/4. In terms of biological role, involved in the biosynthesis of branched-chain amino acids (BCAA). Catalyzes an alkyl-migration followed by a ketol-acid reduction of (S)-2-acetolactate (S2AL) to yield (R)-2,3-dihydroxy-isovalerate. In the isomerase reaction, S2AL is rearranged via a Mg-dependent methyl migration to produce 3-hydroxy-3-methyl-2-ketobutyrate (HMKB). In the reductase reaction, this 2-ketoacid undergoes a metal-dependent reduction by NADPH to yield (R)-2,3-dihydroxy-isovalerate. The chain is Ketol-acid reductoisomerase (NADP(+)) from Acidithiobacillus ferrooxidans (strain ATCC 23270 / DSM 14882 / CIP 104768 / NCIMB 8455) (Ferrobacillus ferrooxidans (strain ATCC 23270)).